Reading from the N-terminus, the 500-residue chain is Histidine ammonia-lyase (500 aa).

Residues 142 to 144 (ASG) constitute a cross-link (5-imidazolinone (Ala-Gly)). Residue S143 is modified to 2,3-didehydroalanine (Ser).

This sequence belongs to the PAL/histidase family. In terms of processing, contains an active site 4-methylidene-imidazol-5-one (MIO), which is formed autocatalytically by cyclization and dehydration of residues Ala-Ser-Gly.

It is found in the cytoplasm. It catalyses the reaction L-histidine = trans-urocanate + NH4(+). Its pathway is amino-acid degradation; L-histidine degradation into L-glutamate; N-formimidoyl-L-glutamate from L-histidine: step 1/3. The sequence is that of Histidine ammonia-lyase from Macrococcus caseolyticus (strain JCSC5402) (Macrococcoides caseolyticum).